We begin with the raw amino-acid sequence, 313 residues long: Ketimine reductase mu-crystallin (313 aa).

Residue arginine 47 coordinates 3,3',5-triiodo-L-thyronine. Residues serine 90, histidine 91, arginine 118, alanine 143, valine 145, glutamine 146, asparagine 167, arginine 168, threonine 169, asparagine 172, threonine 204, methionine 205, and valine 225 each coordinate NADPH. 3,3',5-triiodo-L-thyronine is bound at residue glutamate 256. Serine 291 provides a ligand contact to NADPH.

Belongs to the ornithine cyclodeaminase/mu-crystallin family. As to quaternary structure, homodimer. Binds the thyroid hormone triiodothyronine (T3); T3 binding inhibits enzymatic activity.

It localises to the cytoplasm. It catalyses the reaction L-pipecolate + NADP(+) = Delta(1)-piperideine-2-carboxylate + NADPH + H(+). The enzyme catalyses L-pipecolate + NAD(+) = Delta(1)-piperideine-2-carboxylate + NADH + H(+). The catalysed reaction is L-proline + NADP(+) = 1-pyrroline-2-carboxylate + NADPH + H(+). It carries out the reaction L-proline + NAD(+) = 1-pyrroline-2-carboxylate + NADH + H(+). It catalyses the reaction (3R)-1,4-thiomorpholine-3-carboxylate + NAD(+) = 3,4-dehydrothiomorpholine-3-carboxylate + NADH + 2 H(+). The enzyme catalyses (3R)-1,4-thiomorpholine-3-carboxylate + NADP(+) = 3,4-dehydrothiomorpholine-3-carboxylate + NADPH + 2 H(+). The catalysed reaction is (S)-cystathionine ketimine + NADH + 2 H(+) = (3R,5S)-2,3,5,6,7-pentahydro-1,4-thiazepine-3,5-dicarboxylate + NAD(+). It carries out the reaction (S)-cystathionine ketimine + NADPH + 2 H(+) = (3R,5S)-2,3,5,6,7-pentahydro-1,4-thiazepine-3,5-dicarboxylate + NADP(+). It catalyses the reaction (R)-lanthionine ketimine + NADPH + 2 H(+) = (3R,5R)-1,4-thiomorpholine-3,5-dicarboxylate + NADP(+). The enzyme catalyses Delta(2)-thiazoline-2-carboxylate + NADPH + 2 H(+) = L-thiazolidine-2-carboxylate + NADP(+). In terms of biological role, catalyzes the NAD(P)H-dependent reduction of imine double bonds of a number of cyclic ketimine substrates, including sulfur-containing cyclic ketimines. Under physiological conditions, it efficiently catalyzes delta(1)-piperideine-2-carboxylate (P2C) and delta(1)-pyrroline-2-carboxylate (Pyr2C) reduction, suggesting a central role in lysine and glutamate metabolism. Additional substrates are delta(2)-thiazoline-2-carboxylate (T2C), 3,4-dehydrothiomorpholine-3-carboxylate (AECK), and (R)-lanthionine ketimine (LK) that is reduced at very low rate compared to other substrates. Also catalyzes the NAD(P)H-dependent reduction of (S)-cystathionine ketimine (CysK). The polypeptide is Ketimine reductase mu-crystallin (Rattus norvegicus (Rat)).